The primary structure comprises 166 residues: Interferon gamma (166 aa).

The signal sequence occupies residues Met-1–Gly-23. A Pyrrolidone carboxylic acid modification is found at Gln-24. N-linked (GlcNAc...) asparagine glycans are attached at residues Asn-39 and Asn-106.

This sequence belongs to the type II (or gamma) interferon family. Homodimer. Interacts with IFNGR1 (via extracellular domain); this interaction promotes IFNGR1 dimerization. As to expression, released primarily from activated T lymphocytes.

Its subcellular location is the secreted. Functionally, type II interferon produced by immune cells such as T-cells and NK cells that plays crucial roles in antimicrobial, antiviral, and antitumor responses by activating effector immune cells and enhancing antigen presentation. Primarily signals through the JAK-STAT pathway after interaction with its receptor IFNGR1 to affect gene regulation. Upon IFNG binding, IFNGR1 intracellular domain opens out to allow association of downstream signaling components JAK2, JAK1 and STAT1, leading to STAT1 activation, nuclear translocation and transcription of IFNG-regulated genes. Many of the induced genes are transcription factors such as IRF1 that are able to further drive regulation of a next wave of transcription. Plays a role in class I antigen presentation pathway by inducing a replacement of catalytic proteasome subunits with immunoproteasome subunits. In turn, increases the quantity, quality, and repertoire of peptides for class I MHC loading. Increases the efficiency of peptide generation also by inducing the expression of activator PA28 that associates with the proteasome and alters its proteolytic cleavage preference. Up-regulates as well MHC II complexes on the cell surface by promoting expression of several key molecules such as cathepsins B/CTSB, H/CTSH, and L/CTSL. Participates in the regulation of hematopoietic stem cells during development and under homeostatic conditions by affecting their development, quiescence, and differentiation. This Cervus elaphus (Red deer) protein is Interferon gamma (IFNG).